A 314-amino-acid polypeptide reads, in one-letter code: WD repeat-containing protein 38 (314 aa).

7 WD repeats span residues Q19–R58, G61–V100, G103–L142, G145–S184, G190–Q228, G231–K272, and V274–P312. A disordered region spans residues A294–T314.

The sequence is that of WD repeat-containing protein 38 (WDR38) from Homo sapiens (Human).